The primary structure comprises 189 residues: GMP synthase [glutamine-hydrolyzing] subunit A (189 aa).

One can recognise a Glutamine amidotransferase type-1 domain in the interval 1–189 (MIVILNNGGQ…CKKCGFEFEE (189 aa)). C76 (nucleophile) is an active-site residue. Catalysis depends on residues H163 and E165.

Heterodimer composed of a glutamine amidotransferase subunit (A) and a GMP-binding subunit (B).

The enzyme catalyses XMP + L-glutamine + ATP + H2O = GMP + L-glutamate + AMP + diphosphate + 2 H(+). It participates in purine metabolism; GMP biosynthesis; GMP from XMP (L-Gln route): step 1/1. Its function is as follows. Catalyzes the synthesis of GMP from XMP. The protein is GMP synthase [glutamine-hydrolyzing] subunit A of Methanococcus maripaludis (strain C5 / ATCC BAA-1333).